Reading from the N-terminus, the 256-residue chain is Small ribosomal subunit protein uS2 (256 aa).

This sequence belongs to the universal ribosomal protein uS2 family.

This Acidiphilium cryptum (strain JF-5) protein is Small ribosomal subunit protein uS2.